A 311-amino-acid chain; its full sequence is tRNA dimethylallyltransferase (311 aa).

12–19 serves as a coordination point for ATP; it reads GPTASGKT. 14 to 19 serves as a coordination point for substrate; it reads TASGKT. Interaction with substrate tRNA stretches follow at residues 37–40, 161–165, and 241–246; these read DSAL, QRINR, and RCVGYR.

It belongs to the IPP transferase family. In terms of assembly, monomer. Mg(2+) is required as a cofactor.

It carries out the reaction adenosine(37) in tRNA + dimethylallyl diphosphate = N(6)-dimethylallyladenosine(37) in tRNA + diphosphate. Its function is as follows. Catalyzes the transfer of a dimethylallyl group onto the adenine at position 37 in tRNAs that read codons beginning with uridine, leading to the formation of N6-(dimethylallyl)adenosine (i(6)A). In Histophilus somni (strain 129Pt) (Haemophilus somnus), this protein is tRNA dimethylallyltransferase.